The sequence spans 410 residues: E3 ubiquitin-protein ligase PRT1 (410 aa).

2 consecutive RING-type zinc fingers follow at residues Cys26 to Arg66 and Cys192 to Asn232. The segment at His306–Val370 adopts a ZZ-type zinc-finger fold. Positions 311, 314, 326, 329, 338, 341, 356, and 360 each coordinate Zn(2+). A disordered region spans residues Ile385–Glu410. The span at Pro399 to Glu410 shows a compositional bias: low complexity.

It localises to the cytoplasm. The catalysed reaction is S-ubiquitinyl-[E2 ubiquitin-conjugating enzyme]-L-cysteine + [acceptor protein]-L-lysine = [E2 ubiquitin-conjugating enzyme]-L-cysteine + N(6)-ubiquitinyl-[acceptor protein]-L-lysine.. It functions in the pathway protein modification; protein ubiquitination. Its function is as follows. E3 ubiquitin-protein ligase that mediates ubiquitination and subsequent proteasomal degradation of target proteins. Functions in the N-end rule pathway of protein degradation, where it specifically recognizes and ubiquitinates proteins with a N-terminal bulky aromatic amino acid (Phe). Does not act on aliphatic hydrophobic and basic N-terminal residues (Arg or Leu) containing proteins. This Arabidopsis thaliana (Mouse-ear cress) protein is E3 ubiquitin-protein ligase PRT1 (PRT1).